A 292-amino-acid chain; its full sequence is Protease HtpX (292 aa).

2 helical membrane passes run 4 to 24 (IALF…VLSL) and 34 to 54 (GLMI…LLMS). H139 serves as a coordination point for Zn(2+). Residue E140 is part of the active site. H143 is a Zn(2+) binding site. The next 2 membrane-spanning stretches (helical) occupy residues 158–178 (IVNT…AGFL) and 192–212 (MIYF…ASII). E221 contributes to the Zn(2+) binding site.

Belongs to the peptidase M48B family. Zn(2+) is required as a cofactor.

It is found in the cell inner membrane. The protein is Protease HtpX of Serratia proteamaculans (strain 568).